Reading from the N-terminus, the 379-residue chain is Tetraacyldisaccharide 4'-kinase (379 aa).

63–70 contacts ATP; the sequence is AVGGAGKT.

The protein belongs to the LpxK family.

The enzyme catalyses a lipid A disaccharide + ATP = a lipid IVA + ADP + H(+). Its pathway is glycolipid biosynthesis; lipid IV(A) biosynthesis; lipid IV(A) from (3R)-3-hydroxytetradecanoyl-[acyl-carrier-protein] and UDP-N-acetyl-alpha-D-glucosamine: step 6/6. In terms of biological role, transfers the gamma-phosphate of ATP to the 4'-position of a tetraacyldisaccharide 1-phosphate intermediate (termed DS-1-P) to form tetraacyldisaccharide 1,4'-bis-phosphate (lipid IVA). The polypeptide is Tetraacyldisaccharide 4'-kinase (Anaeromyxobacter dehalogenans (strain 2CP-1 / ATCC BAA-258)).